The primary structure comprises 351 residues: UDP-N-acetylenolpyruvoylglucosamine reductase (351 aa).

Residues glycine 11 to isoleucine 213 enclose the FAD-binding PCMH-type domain. The active site involves arginine 158. The active-site Proton donor is serine 239. Glutamate 343 is an active-site residue.

It belongs to the MurB family. Requires FAD as cofactor.

It is found in the cytoplasm. The catalysed reaction is UDP-N-acetyl-alpha-D-muramate + NADP(+) = UDP-N-acetyl-3-O-(1-carboxyvinyl)-alpha-D-glucosamine + NADPH + H(+). It functions in the pathway cell wall biogenesis; peptidoglycan biosynthesis. Functionally, cell wall formation. In Tropheryma whipplei (strain Twist) (Whipple's bacillus), this protein is UDP-N-acetylenolpyruvoylglucosamine reductase.